The following is a 522-amino-acid chain: Exo-alpha-(1-&gt;6)-L-arabinofuranosidase (522 aa).

The alpha-L-arabinofuranose site is built by Glu39, Asn84, and Asn185. Glu186 serves as the catalytic Proton donor/acceptor. Residues Tyr257, Glu310, and Gln370 each contribute to the alpha-L-arabinofuranose site. The active-site Nucleophile is the Glu310.

The protein belongs to the glycosyl hydrolase 51 family. As to quaternary structure, homohexamer; trimer of dimers.

It catalyses the reaction Hydrolysis of terminal non-reducing alpha-L-arabinofuranoside residues in alpha-L-arabinosides.. The catalysed reaction is (20S)-ginsenoside Rc + H2O = L-arabinofuranose + (20S)-ginsenoside Rd. Its activity is regulated as follows. Completely inhibited by Cu(2+) and partially inhibited by Co(2+) and Ba(2+). Functionally, catalyzes the hydrolysis of p-nitrophenyl-alpha-L-arabinofuranoside (pNP-alphaL-Af) and the hydrolysis of the terminal alpha-L-arabinofuranoside at the C20 position of ginsenoside Rc to produce ginsenoside Rd. Cannot hydrolyze p-nitrophenyl-alpha-L-arabinopyranoside (pNP-alphaL-Ap) and ginsenoside Rb2. This is Exo-alpha-(1-&gt;6)-L-arabinofuranosidase from Bifidobacterium longum.